A 149-amino-acid polypeptide reads, in one-letter code: Calmodulin (149 aa).

Ala2 carries the post-translational modification N-acetylalanine. EF-hand domains follow at residues 8–43, 44–79, 81–116, and 117–149; these read EQIA…LGQN, PTEA…KMKD, DSEE…LGEK, and LTDE…MTTK. Positions 21, 23, 25, 27, 32, 57, 59, 61, 63, 68, 94, 96, 98, and 105 each coordinate Ca(2+). Lys116 bears the N6,N6,N6-trimethyllysine mark. Ca(2+)-binding residues include Asp130, Asp132, Asp134, Gln136, and Glu141.

It belongs to the calmodulin family. In terms of assembly, interacts (in the presence of Ca(2+)) with pde-1, madf-3, rpl-7A, tax-6, efk-1, npp-1, obr-4, sos-1, akt-1, unc-13, tag-196, ugt-48, nmy-2, F27D4.4, ddx-23, efa-6 and R11H6.4.

Calmodulin mediates the control of a large number of enzymes, ion channels and other proteins by Ca(2+). Among the enzymes to be stimulated by the calmodulin-Ca(2+) complex are a number of protein kinases and phosphatases. This is Calmodulin (cmd-1) from Caenorhabditis elegans.